We begin with the raw amino-acid sequence, 54 residues long: uncharacterized protein (54 aa).

This is an uncharacterized protein from Saccharomyces cerevisiae (strain ATCC 204508 / S288c) (Baker's yeast).